The sequence spans 330 residues: Acrylyl-CoA reductase AcuI (330 aa).

NADP(+)-binding positions include Tyr-44, 159–162 (AGGV), 181–183 (TGR), Arg-201, Leu-247, and Ser-272.

It belongs to the zinc-containing alcohol dehydrogenase family. Acrylyl-CoA reductase subfamily. Homodimer.

The protein localises to the cytoplasm. It catalyses the reaction propanoyl-CoA + NADP(+) = acryloyl-CoA + NADPH + H(+). Its function is as follows. Probably catalyzes the NADPH-dependent reduction of acrylyl-CoA to propanoyl-CoA. Restores acrylate resistance when expressed in an E.coli strain K12 acuI deletion. This Ruegeria pomeroyi (strain ATCC 700808 / DSM 15171 / DSS-3) (Silicibacter pomeroyi) protein is Acrylyl-CoA reductase AcuI (acuI).